Reading from the N-terminus, the 554-residue chain is D-3-phosphoglycerate dehydrogenase (554 aa).

NAD(+)-binding positions include 177 to 178 (KI), D197, 256 to 258 (CSR), and D282. R258 is an active-site residue. E287 is an active-site residue. Catalysis depends on H305, which acts as the Proton donor. An NAD(+)-binding site is contributed by 305 to 308 (HLGA). The 73-residue stretch at 482–554 (MLFTLHRDMP…GIRDAYTVKL (73 aa)) folds into the ACT domain.

Belongs to the D-isomer specific 2-hydroxyacid dehydrogenase family.

It carries out the reaction (2R)-3-phosphoglycerate + NAD(+) = 3-phosphooxypyruvate + NADH + H(+). It catalyses the reaction (R)-2-hydroxyglutarate + NAD(+) = 2-oxoglutarate + NADH + H(+). Its pathway is amino-acid biosynthesis; L-serine biosynthesis; L-serine from 3-phospho-D-glycerate: step 1/3. Catalyzes the reversible oxidation of 3-phospho-D-glycerate to 3-phosphonooxypyruvate, the first step of the phosphorylated L-serine biosynthesis pathway. Also catalyzes the reversible oxidation of 2-hydroxyglutarate to 2-oxoglutarate. This chain is D-3-phosphoglycerate dehydrogenase (serA), found in Synechocystis sp. (strain ATCC 27184 / PCC 6803 / Kazusa).